The following is a 122-amino-acid chain: Large ribosomal subunit protein uL14 (122 aa).

It belongs to the universal ribosomal protein uL14 family. As to quaternary structure, part of the 50S ribosomal subunit. Forms a cluster with proteins L3 and L19. In the 70S ribosome, L14 and L19 interact and together make contacts with the 16S rRNA in bridges B5 and B8.

Its function is as follows. Binds to 23S rRNA. Forms part of two intersubunit bridges in the 70S ribosome. This chain is Large ribosomal subunit protein uL14, found in Myxococcus xanthus (strain DK1622).